The following is a 140-amino-acid chain: uncharacterized protein (140 aa).

Polar residues predominate over residues 1–19; it reads MGLCGSKTQPMPSQTTTVA. Residues 1–140 form a disordered region; sequence MGLCGSKTQP…ERERENMIYD (140 aa). A lipid anchor (N-myristoyl glycine) is attached at Gly-2. Residue Cys-4 is the site of S-palmitoyl cysteine attachment. The segment covering 27 to 40 has biased composition (basic and acidic residues); the sequence is INRDTVKSKQELRH. Positions 41 to 51 are enriched in basic residues; sequence KEKKDKKKKTQ. A compositionally biased stretch (basic and acidic residues) spans 73–140; the sequence is DPSKNKVSPK…ERERENMIYD (68 aa).

This sequence to S.pombe new13. Post-translationally, myristoylated. The N-myristoylated protein is further palmitoylated by ERF2, PFA4 and slightly by PFA5, but not by PFA3.

It is found in the cytoplasm. The protein resides in the cytosol. This is an uncharacterized protein from Saccharomyces cerevisiae (strain ATCC 204508 / S288c) (Baker's yeast).